We begin with the raw amino-acid sequence, 285 residues long: MDINEIKDIKTKELVQKYNFRFSKSLGQNFLIDDSVPRDIVNGADVCEDDLVIEIGPGVGTLTVQLLKRAKRVVAIELDSSLIPILTAELGDNPKFQLIHNDALKVDFNEIIGDEKSVKLVANLPYYVTTPIIVNLLKGGYNFKSLTIMIQKEVAERMNAEPNCKDYGALSILVQYYCNTKIVRKVPPSCFIPRPKVDSIVIRLERLEEPSVKVKNEKLFFEIVRHAFNMRRKTLWNATKNVKLPKELMEKAYEEAGIDPKRRGETLSLAEFGALSDAIDKYMNN.

Asn29, Leu31, Gly56, Glu77, Asp102, and Asn123 together coordinate S-adenosyl-L-methionine.

Belongs to the class I-like SAM-binding methyltransferase superfamily. rRNA adenine N(6)-methyltransferase family. RsmA subfamily.

It is found in the cytoplasm. The enzyme catalyses adenosine(1518)/adenosine(1519) in 16S rRNA + 4 S-adenosyl-L-methionine = N(6)-dimethyladenosine(1518)/N(6)-dimethyladenosine(1519) in 16S rRNA + 4 S-adenosyl-L-homocysteine + 4 H(+). Functionally, specifically dimethylates two adjacent adenosines (A1518 and A1519) in the loop of a conserved hairpin near the 3'-end of 16S rRNA in the 30S particle. May play a critical role in biogenesis of 30S subunits. This is Ribosomal RNA small subunit methyltransferase A from Clostridium perfringens (strain ATCC 13124 / DSM 756 / JCM 1290 / NCIMB 6125 / NCTC 8237 / Type A).